The primary structure comprises 685 residues: Probable transketolase (685 aa).

Substrate is bound at residue His-32. Residues His-72 and 121–123 (GPL) each bind thiamine diphosphate. Asp-162 is a Mg(2+) binding site. Gly-163 and Asn-192 together coordinate thiamine diphosphate. Residues Asn-192 and Ile-194 each coordinate Mg(2+). Residues His-268, Arg-363, and Ser-390 each coordinate substrate. His-268 contacts thiamine diphosphate. Residues Glu-422 and Phe-448 each coordinate thiamine diphosphate. Glu-422 (proton donor) is an active-site residue. The substrate site is built by His-472, Asp-480, and Arg-531.

The protein belongs to the transketolase family. Homodimer. The cofactor is Mg(2+). Ca(2+) is required as a cofactor. Requires Mn(2+) as cofactor. It depends on Co(2+) as a cofactor. Thiamine diphosphate serves as cofactor.

It carries out the reaction D-sedoheptulose 7-phosphate + D-glyceraldehyde 3-phosphate = aldehydo-D-ribose 5-phosphate + D-xylulose 5-phosphate. Catalyzes the transfer of a two-carbon ketol group from a ketose donor to an aldose acceptor, via a covalent intermediate with the cofactor thiamine pyrophosphate. This chain is Probable transketolase, found in Schizosaccharomyces pombe (strain 972 / ATCC 24843) (Fission yeast).